The sequence spans 287 residues: HTH-type transcriptional regulator MurR (287 aa).

An HTH rpiR-type domain is found at 1-77; it reads MLYLAKMRNA…MALIEEYSVN (77 aa). The H-T-H motif DNA-binding region spans 37-56; the sequence is SRNLAKQLEVSQSSIVKFAQ. The region spanning 128 to 268 is the SIS domain; sequence VINLISKARL…FVGMVQLNDV (141 aa).

Homotetramer.

The protein operates within amino-sugar metabolism; N-acetylmuramate degradation [regulation]. In terms of biological role, represses the expression of the murPQ operon involved in the uptake and degradation of N-acetylmuramic acid (MurNAc). Binds to two adjacent inverted repeats within the operator region. MurNAc 6-phosphate, the substrate of MurQ, is the specific inducer that weakens binding of MurR to the operator. The protein is HTH-type transcriptional regulator MurR of Citrobacter koseri (strain ATCC BAA-895 / CDC 4225-83 / SGSC4696).